A 289-amino-acid polypeptide reads, in one-letter code: Glucose and ribitol dehydrogenase homolog 2 (289 aa).

Residues 1–32 (MASGFPPQKQETQPGIQHVMEPTPEFSSSNYK) are disordered. NAD(+) is bound at residue 43–67 (LVTGGDSGIGKAVCHCYALEGASVA). Serine 180 is a binding site for substrate. Tyrosine 193 (proton acceptor) is an active-site residue.

This sequence belongs to the short-chain dehydrogenases/reductases (SDR) family.

May act as a short alcohol-polyol-sugar dehydrogenase possibly related to carbohydrate metabolism and the acquisition of desiccation tolerance. May also be involved in signal transduction. This Arabidopsis thaliana (Mouse-ear cress) protein is Glucose and ribitol dehydrogenase homolog 2.